A 367-amino-acid chain; its full sequence is Flagellar P-ring protein (367 aa).

The first 18 residues, 1–18 (MFRALITALFCFSGLALA), serve as a signal peptide directing secretion.

This sequence belongs to the FlgI family. In terms of assembly, the basal body constitutes a major portion of the flagellar organelle and consists of four rings (L,P,S, and M) mounted on a central rod.

It is found in the periplasm. It localises to the bacterial flagellum basal body. In terms of biological role, assembles around the rod to form the L-ring and probably protects the motor/basal body from shearing forces during rotation. The protein is Flagellar P-ring protein of Rhizorhabdus wittichii (strain DSM 6014 / CCUG 31198 / JCM 15750 / NBRC 105917 / EY 4224 / RW1) (Sphingomonas wittichii).